The following is a 428-amino-acid chain: Serine--tRNA ligase (428 aa).

235–237 (TAE) lines the L-serine pocket. 266–268 (RSE) contributes to the ATP binding site. Residue E289 coordinates L-serine. Position 353–356 (353–356 (EISS)) interacts with ATP. S389 contacts L-serine.

Belongs to the class-II aminoacyl-tRNA synthetase family. Type-1 seryl-tRNA synthetase subfamily. In terms of assembly, homodimer. The tRNA molecule binds across the dimer.

The protein localises to the cytoplasm. The enzyme catalyses tRNA(Ser) + L-serine + ATP = L-seryl-tRNA(Ser) + AMP + diphosphate + H(+). It catalyses the reaction tRNA(Sec) + L-serine + ATP = L-seryl-tRNA(Sec) + AMP + diphosphate + H(+). It functions in the pathway aminoacyl-tRNA biosynthesis; selenocysteinyl-tRNA(Sec) biosynthesis; L-seryl-tRNA(Sec) from L-serine and tRNA(Sec): step 1/1. Functionally, catalyzes the attachment of serine to tRNA(Ser). Is also able to aminoacylate tRNA(Sec) with serine, to form the misacylated tRNA L-seryl-tRNA(Sec), which will be further converted into selenocysteinyl-tRNA(Sec). This chain is Serine--tRNA ligase, found in Shewanella sp. (strain ANA-3).